The sequence spans 248 residues: NAD(P)H-quinone oxidoreductase subunit K (248 aa).

Cys-66, Cys-67, Cys-131, and Cys-162 together coordinate [4Fe-4S] cluster.

It belongs to the complex I 20 kDa subunit family. As to quaternary structure, NDH-1 can be composed of about 15 different subunits; different subcomplexes with different compositions have been identified which probably have different functions. It depends on [4Fe-4S] cluster as a cofactor.

The protein localises to the cellular thylakoid membrane. It carries out the reaction a plastoquinone + NADH + (n+1) H(+)(in) = a plastoquinol + NAD(+) + n H(+)(out). The enzyme catalyses a plastoquinone + NADPH + (n+1) H(+)(in) = a plastoquinol + NADP(+) + n H(+)(out). Functionally, NDH-1 shuttles electrons from an unknown electron donor, via FMN and iron-sulfur (Fe-S) centers, to quinones in the respiratory and/or the photosynthetic chain. The immediate electron acceptor for the enzyme in this species is believed to be plastoquinone. Couples the redox reaction to proton translocation, and thus conserves the redox energy in a proton gradient. Cyanobacterial NDH-1 also plays a role in inorganic carbon-concentration. The sequence is that of NAD(P)H-quinone oxidoreductase subunit K from Synechococcus sp. (strain WH7803).